Reading from the N-terminus, the 348-residue chain is Endoglucanase-6B (348 aa).

Substrate-binding residues include Trp-52 and Ser-54. Active-site proton donor residues include Asp-92 and Asp-139. The substrate site is built by Asn-183, Trp-186, Asn-222, Trp-282, Lys-310, and Glu-314. A compositionally biased stretch (low complexity) spans 222 to 241 (NYNPYSTSNPPPYTSGSPSP). Positions 222–244 (NYNPYSTSNPPPYTSGSPSPDES) are disordered.

This sequence belongs to the glycosyl hydrolase 6 (cellulase B) family. As to quaternary structure, monomer.

It catalyses the reaction Endohydrolysis of (1-&gt;4)-beta-D-glucosidic linkages in cellulose, lichenin and cereal beta-D-glucans.. Plays a central role in the recycling of plant biomass. The biological conversion of cellulose to glucose generally requires three types of hydrolytic enzymes: (1) Endoglucanases which cut internal beta-1,4-glucosidic bonds; (2) Exocellobiohydrolases that cut the disaccharide cellobiose from the non-reducing end of the cellulose polymer chain; (3) Beta-1,4-glucosidases which hydrolyze the cellobiose and other short cello-oligosaccharides to glucose. The protein is Endoglucanase-6B of Humicola insolens (Soft-rot fungus).